The chain runs to 63 residues: Large ribosomal subunit protein uL30 (63 aa).

Belongs to the universal ribosomal protein uL30 family. In terms of assembly, part of the 50S ribosomal subunit.

The chain is Large ribosomal subunit protein uL30 from Bradyrhizobium sp. (strain BTAi1 / ATCC BAA-1182).